Consider the following 553-residue polypeptide: Formate--tetrahydrofolate ligase (553 aa).

ATP is bound at residue T64–T71.

Belongs to the formate--tetrahydrofolate ligase family.

It carries out the reaction (6S)-5,6,7,8-tetrahydrofolate + formate + ATP = (6R)-10-formyltetrahydrofolate + ADP + phosphate. It functions in the pathway one-carbon metabolism; tetrahydrofolate interconversion. The polypeptide is Formate--tetrahydrofolate ligase (Pseudothermotoga lettingae (strain ATCC BAA-301 / DSM 14385 / NBRC 107922 / TMO) (Thermotoga lettingae)).